The sequence spans 81 residues: Putative defensin-like protein 26 (81 aa).

Positions 1–21 (MASLKVFSFALLIVLTFSVIG) are cleaved as a signal peptide. Disulfide bonds link C33–C81 and C52–C77.

The protein belongs to the DEFL family.

It is found in the secreted. The polypeptide is Putative defensin-like protein 26 (Arabidopsis thaliana (Mouse-ear cress)).